The primary structure comprises 195 residues: Phosphoheptose isomerase (195 aa).

The 161-residue stretch at 35–195 folds into the SIS domain; the sequence is LCVALYRGDK…EKEIFGDGVN (161 aa). Residue 51–53 participates in substrate binding; it reads NGG. Positions 60 and 64 each coordinate Zn(2+). Residues glutamate 64, 93 to 94, 119 to 121, serine 124, and glutamine 171 each bind substrate; these read ND and STS. Zn(2+) contacts are provided by glutamine 171 and histidine 179.

The protein belongs to the SIS family. GmhA subfamily. Homotetramer. It depends on Zn(2+) as a cofactor.

The protein localises to the cytoplasm. It carries out the reaction 2 D-sedoheptulose 7-phosphate = D-glycero-alpha-D-manno-heptose 7-phosphate + D-glycero-beta-D-manno-heptose 7-phosphate. The protein operates within carbohydrate biosynthesis; D-glycero-D-manno-heptose 7-phosphate biosynthesis; D-glycero-alpha-D-manno-heptose 7-phosphate and D-glycero-beta-D-manno-heptose 7-phosphate from sedoheptulose 7-phosphate: step 1/1. In terms of biological role, catalyzes the isomerization of sedoheptulose 7-phosphate in D-glycero-D-manno-heptose 7-phosphate. This chain is Phosphoheptose isomerase, found in Sulfurimonas denitrificans (strain ATCC 33889 / DSM 1251) (Thiomicrospira denitrificans (strain ATCC 33889 / DSM 1251)).